The following is a 468-amino-acid chain: Alpha-N-acetylgalactosaminidase (468 aa).

Residues 1–30 (MENTRRNFLKKVTAAGIGAAGLAVTDQAMA) constitute a signal peptide (tat-type signal). NAD(+)-binding positions include 62 to 63 (SR), Asp-84, 133 to 136 (WEWH), 154 to 155 (EV), and Asn-183. Tyr-212 serves as a coordination point for substrate. 243–247 (AEAQW) is a binding site for NAD(+). Residues Arg-248, 260–263 (YPTH), and Tyr-342 contribute to the substrate site. An NAD(+)-binding site is contributed by Tyr-260.

The protein belongs to the Gfo/Idh/MocA family. Glycosyl hydrolase 109 subfamily. NAD(+) is required as a cofactor. Predicted to be exported by the Tat system. The position of the signal peptide cleavage has not been experimentally proven.

It carries out the reaction Cleavage of non-reducing alpha-(1-&gt;3)-N-acetylgalactosamine residues from human blood group A and AB mucin glycoproteins, Forssman hapten and blood group A lacto series glycolipids.. Functionally, glycosidase that has specific alpha-N-acetylgalactosaminidase activity. This chain is Alpha-N-acetylgalactosaminidase (nagA), found in Tannerella forsythia (Bacteroides forsythus).